Here is a 478-residue protein sequence, read N- to C-terminus: Leukotoxin secretion protein D (478 aa).

Topologically, residues 1 to 77 (MKIWLSGIYE…LAVAIVLASV (77 aa)) are cytoplasmic. A helical transmembrane segment spans residues 78–98 (SKVEIVATAPGKLTFSGRSKE). At 99–478 (IKPIENTIVQ…ESVTESLRER (380 aa)) the chain is on the periplasmic side.

It belongs to the membrane fusion protein (MFP) (TC 8.A.1) family.

It localises to the cell inner membrane. Functionally, involved in the transport of the Leukotoxin. In Pasteurella haemolytica-like sp. (strain 5943B), this protein is Leukotoxin secretion protein D (lktD).